The chain runs to 126 residues: 14 kDa phosphohistidine phosphatase (126 aa).

Lys-22 is a binding site for substrate. The active-site Proton acceptor is His-54. Substrate is bound at residue Ser-95–Gly-97.

It belongs to the janus family. As to quaternary structure, monomer.

Its subcellular location is the cytoplasm. The catalysed reaction is N(pros)-phospho-L-histidyl-[protein] + H2O = L-histidyl-[protein] + phosphate. It carries out the reaction N(tele)-phospho-L-histidyl-[protein] + H2O = L-histidyl-[protein] + phosphate. Exhibits phosphohistidine phosphatase activity. The chain is 14 kDa phosphohistidine phosphatase (PHPT1) from Sus scrofa (Pig).